The sequence spans 138 residues: Ribosome-binding factor A (138 aa).

This sequence belongs to the RbfA family. In terms of assembly, monomer. Binds 30S ribosomal subunits, but not 50S ribosomal subunits or 70S ribosomes.

It localises to the cytoplasm. Its function is as follows. One of several proteins that assist in the late maturation steps of the functional core of the 30S ribosomal subunit. Associates with free 30S ribosomal subunits (but not with 30S subunits that are part of 70S ribosomes or polysomes). Required for efficient processing of 16S rRNA. May interact with the 5'-terminal helix region of 16S rRNA. The protein is Ribosome-binding factor A of Paracoccus denitrificans (strain Pd 1222).